The primary structure comprises 599 residues: Elongation factor 4 (599 aa).

A tr-type G domain is found at 2–184; sequence KNIRNFSIIA…RLVRDIPPPE (183 aa). GTP is bound by residues 14–19 and 131–134; these read DHGKST and NKID.

Belongs to the TRAFAC class translation factor GTPase superfamily. Classic translation factor GTPase family. LepA subfamily.

The protein resides in the cell inner membrane. The catalysed reaction is GTP + H2O = GDP + phosphate + H(+). Required for accurate and efficient protein synthesis under certain stress conditions. May act as a fidelity factor of the translation reaction, by catalyzing a one-codon backward translocation of tRNAs on improperly translocated ribosomes. Back-translocation proceeds from a post-translocation (POST) complex to a pre-translocation (PRE) complex, thus giving elongation factor G a second chance to translocate the tRNAs correctly. Binds to ribosomes in a GTP-dependent manner. This chain is Elongation factor 4, found in Shigella dysenteriae serotype 1 (strain Sd197).